Here is a 415-residue protein sequence, read N- to C-terminus: DNA polymerase IV 2 (415 aa).

The region spanning 7 to 183 (ILHADLDAFY…LPVSLMWGVG (177 aa)) is the UmuC domain. The Mg(2+) site is built by Asp-11 and Asp-101. Glu-102 is an active-site residue.

Belongs to the DNA polymerase type-Y family. In terms of assembly, monomer. Mg(2+) serves as cofactor.

Its subcellular location is the cytoplasm. The catalysed reaction is DNA(n) + a 2'-deoxyribonucleoside 5'-triphosphate = DNA(n+1) + diphosphate. Its function is as follows. Poorly processive, error-prone DNA polymerase involved in untargeted mutagenesis. Copies undamaged DNA at stalled replication forks, which arise in vivo from mismatched or misaligned primer ends. These misaligned primers can be extended by PolIV. Exhibits no 3'-5' exonuclease (proofreading) activity. May be involved in translesional synthesis, in conjunction with the beta clamp from PolIII. The chain is DNA polymerase IV 2 (dinB2) from Mesorhizobium japonicum (strain LMG 29417 / CECT 9101 / MAFF 303099) (Mesorhizobium loti (strain MAFF 303099)).